The chain runs to 1535 residues: Putative protein TIC 214 C-terminal part (1535 aa).

3 disordered regions span residues Glu264 to Asp283, Glu312 to Ala333, and Asp1263 to Lys1282.

Belongs to the TIC214 family. Part of the Tic complex.

The protein localises to the plastid. The protein resides in the chloroplast. In terms of biological role, involved in protein precursor import into chloroplasts. May be part of an intermediate translocation complex acting as a protein-conducting channel at the inner envelope. The sequence is that of Putative protein TIC 214 C-terminal part from Piper cenocladum (Ant piper).